We begin with the raw amino-acid sequence, 281 residues long: N-acetyltransferase ECO1 (281 aa).

The CCHH-type zinc finger occupies 33-57 (VKCDKCEMSYSSTSIEDRAIHEKYH). The interval 86-105 (LSRSTGTITPLNSSPLKKSS) is disordered. A compositionally biased stretch (low complexity) spans 95-105 (PLNSSPLKKSS). N6-acetyllysine; by autocatalysis is present on K223.

This sequence belongs to the acetyltransferase family. ECO subfamily. As to quaternary structure, binds specifically to CHL12, RFC1, RFC2, RFC3, RFC4, RFC5 and RAD24 when members of an RFC complex. Interacts with CHL1 and MPS3. Autoacetylates in vitro.

The protein localises to the nucleus. Functionally, required for establishment of sister chromatid cohesion during S phase but not for its further maintenance during G2 or M phases or for loading the cohesin complex onto DNA. Interacts with the three known alternate replication factor C (RFC) complexes, suggesting that these complexes have essential but redundant activity in cohesion establishment. Acts by acetylating the cohesin complex component SMC3. In vitro, possesses acetyltransferase activity where it can acetylate itself and components of the cohesin complex (MCD1, IRR1 and PDS5), but is unable to acetylate histones. The protein is N-acetyltransferase ECO1 (ECO1) of Saccharomyces cerevisiae (strain ATCC 204508 / S288c) (Baker's yeast).